Consider the following 401-residue polypeptide: Chalcone synthase 3 (401 aa).

Cysteine 168 is an active-site residue.

The protein belongs to the thiolase-like superfamily. Chalcone/stilbene synthases family.

It catalyses the reaction (E)-4-coumaroyl-CoA + 3 malonyl-CoA + 3 H(+) = 2',4,4',6'-tetrahydroxychalcone + 3 CO2 + 4 CoA. The protein operates within secondary metabolite biosynthesis; flavonoid biosynthesis. Functionally, the primary product of this enzyme is 4,2',4',6'-tetrahydroxychalcone (also termed naringenin-chalcone or chalcone) which can under specific conditions spontaneously isomerize into naringenin. The chain is Chalcone synthase 3 (CHS3) from Sorghum bicolor (Sorghum).